The sequence spans 413 residues: Na(+)-translocating NADH-quinone reductase subunit B (413 aa).

Helical transmembrane passes span Met56 to Gly76, Leu123 to Trp143, and Ile169 to Ile189. At Thr236 the chain carries FMN phosphoryl threonine. 5 helical membrane passes run Gly270 to Gly290, Ile297 to Ser317, Leu322 to Phe342, Trp358 to Tyr378, and Gly381 to Val401.

Belongs to the NqrB/RnfD family. As to quaternary structure, composed of six subunits; NqrA, NqrB, NqrC, NqrD, NqrE and NqrF. FMN is required as a cofactor.

Its subcellular location is the cell inner membrane. The catalysed reaction is a ubiquinone + n Na(+)(in) + NADH + H(+) = a ubiquinol + n Na(+)(out) + NAD(+). Functionally, NQR complex catalyzes the reduction of ubiquinone-1 to ubiquinol by two successive reactions, coupled with the transport of Na(+) ions from the cytoplasm to the periplasm. NqrA to NqrE are probably involved in the second step, the conversion of ubisemiquinone to ubiquinol. This chain is Na(+)-translocating NADH-quinone reductase subunit B, found in Yersinia pestis.